The sequence spans 404 residues: WD repeat and SOCS box-containing protein 2 (404 aa).

WD repeat units follow at residues 16–55 (GRPH…LIPW), 81–140 (GSPK…IWEV), 144–183 (LLLL…IWDL), 188–226 (KQIQ…LWSM), 230–268 (TLIR…MWDP), 283–322 (DPAM…IWAL), and 325–362 (KTPI…FWTA). The segment at 68-87 (AKSRSSKNETKGRGSPKEKT) is disordered. Residues 356–404 (HVQFWTAPRVLSSLKHLCRKALRSFLTTYQVLALPIPKKMKEFLTYRTF) form the SOCS box domain.

It participates in protein modification; protein ubiquitination. May be a substrate-recognition component of a SCF-like ECS (Elongin-Cullin-SOCS-box protein) E3 ubiquitin ligase complex which mediates the ubiquitination and subsequent proteasomal degradation of target proteins. The polypeptide is WD repeat and SOCS box-containing protein 2 (WSB2) (Homo sapiens (Human)).